The chain runs to 224 residues: Ribonuclease 3 (224 aa).

The RNase III domain maps to 4–126 (LDRLQHKIGY…IIGAMSLDSN (123 aa)). Residue Glu-39 coordinates Mg(2+). Asp-43 is a catalytic residue. Mg(2+) contacts are provided by Asp-112 and Glu-115. Glu-115 is a catalytic residue. A DRBM domain is found at 153–223 (DPKTRLQEYL…AEQILKVLDI (71 aa)).

This sequence belongs to the ribonuclease III family. In terms of assembly, homodimer. It depends on Mg(2+) as a cofactor.

Its subcellular location is the cytoplasm. It carries out the reaction Endonucleolytic cleavage to 5'-phosphomonoester.. Digests double-stranded RNA. Involved in the processing of primary rRNA transcript to yield the immediate precursors to the large and small rRNAs (23S and 16S). Processes some mRNAs, and tRNAs when they are encoded in the rRNA operon. Processes pre-crRNA and tracrRNA of type II CRISPR loci if present in the organism. This is Ribonuclease 3 from Actinobacillus succinogenes (strain ATCC 55618 / DSM 22257 / CCUG 43843 / 130Z).